We begin with the raw amino-acid sequence, 301 residues long: MYLNMTHLRQLESESIHIIREVVSECENPVMLYSIGKDSSVMLHLALKAFYPAKPSFPLMHIDTTWKFREMISFRDQMASEYGFDLLVHINQDGVDQGISPFKHGSALYTDIMKTEGLKQALSKYKFDAAFGGARRDEEKSRAKERIFSFRSANHGWDPKNQRPELWNLYNTRVNPGENIRVFPLSNWTELDVWQYIYLEQIPIVPLYFAKQRPVVKRNGMLILLDDERLKLQPGEQVQMKPVRFRTLGCYPLTGAIESTAATLPEIIQEMLLTRTSERQGRLIDHDQAGSMEKKKQEGYF.

The protein belongs to the PAPS reductase family. CysD subfamily. As to quaternary structure, heterodimer composed of CysD, the smaller subunit, and CysN.

The catalysed reaction is sulfate + ATP + H(+) = adenosine 5'-phosphosulfate + diphosphate. It functions in the pathway sulfur metabolism; hydrogen sulfide biosynthesis; sulfite from sulfate: step 1/3. In terms of biological role, with CysN forms the ATP sulfurylase (ATPS) that catalyzes the adenylation of sulfate producing adenosine 5'-phosphosulfate (APS) and diphosphate, the first enzymatic step in sulfur assimilation pathway. APS synthesis involves the formation of a high-energy phosphoric-sulfuric acid anhydride bond driven by GTP hydrolysis by CysN coupled to ATP hydrolysis by CysD. This is Sulfate adenylyltransferase subunit 2 from Trichlorobacter lovleyi (strain ATCC BAA-1151 / DSM 17278 / SZ) (Geobacter lovleyi).